We begin with the raw amino-acid sequence, 150 residues long: MQIILLDKVLNVGGLGDIVKVKDGYARNFLIPTGRARRATAANKAEFEAKRVELEKAAAAKLAESQAQGEKLGGTTVKLTQKAGVDGRLFGSVTNGDIAEELGKQGYKVAKSQVRLPNGPIKVVGDSTVSVALHTDVVVDITVTVYGETA.

Belongs to the bacterial ribosomal protein bL9 family.

Its function is as follows. Binds to the 23S rRNA. In Variovorax paradoxus (strain S110), this protein is Large ribosomal subunit protein bL9.